The chain runs to 158 residues: MILLKLYLTLAAILCQSRGTTSLDLDDLMTTNPEIQNEIINKHNDLRRTVDPPAKNMLKMSWDNTIAESAKRAALRCNQNEHTPVSGRTIGGVVCGENYFMSSNLRTWSFGIQSWFDERNYFKFGFGPTRAGVMVGHYTQVVWYKSYKMGCAINLCPN.

The N-terminal stretch at 1 to 22 (MILLKLYLTLAAILCQSRGTTS) is a signal peptide. The SCP domain maps to 41–158 (NKHNDLRRTV…MGCAINLCPN (118 aa)). An intrachain disulfide couples C77 to C156.

The protein belongs to the CRISP family. Post-translationally, contains 8 disulfide bonds. As to expression, expressed by the venom gland.

Its subcellular location is the secreted. Functionally, blocks ryanodine receptors, and potassium channels. This Varanus acanthurus (Ridge-tailed monitor) protein is Cysteine-rich venom protein VAR7.